An 868-amino-acid chain; its full sequence is DNA mismatch repair protein MutS (868 aa).

Residue 620 to 627 coordinates ATP; the sequence is GPNMGGKS.

It belongs to the DNA mismatch repair MutS family.

This protein is involved in the repair of mismatches in DNA. It is possible that it carries out the mismatch recognition step. This protein has a weak ATPase activity. In Xylella fastidiosa (strain 9a5c), this protein is DNA mismatch repair protein MutS.